Reading from the N-terminus, the 912-residue chain is MEVQLGLGRVYPRPPSKTYRGAFQNLFQSVREVIQNPGPRHPEATSAAPPGARLQQQHQHQQQHQHETSPRRQQQQQPEDGSPQRPSRGPTSYLALDEEQQPSQHQSAKGHPESGCVPEPVAMSRTGKGLEQQQPAPPDEDDSAAPSTLSLLGPTFPGLSSCSTDLKDILSEAGTMQLLQRQRQRQQQRQQQQQQQQQQQQQQQQQQEVVSEGGSSGRAREAAGAPTSSKDSYLGGSSTISDSAKELCKAVSVSMGLGVEALEHLSPGEQLRGDCMYAPLLGGPPPVCPCAPLTECKGSVLDDGPSKGTEETAEYSPFKTGYAKGLDGDSLGCSGSSQAGGSGTLEIPSTLSLYKSGTLDEAAAYQSRDYYNFQLSLAGPPPPPPSPHPHARIKLENPLDYGSAWAAAAAQCRYGDLASLHGGGAAGPGSGSPSATASSSWHTLFTAEEGQLYGPCGGSGGGGTGESVSVTPYGYTRPQQGLTGQEGDFPPPDVWYPGGVVSRMPYPSASCVKSEMGPWMESYSGPYGDMRLETTRDHVLPIDYYFPPQKTCLICGDEASGCHYGALTCGSCKVFFKRAAEGKQKYLCASRNDCTIDKFRRKNCPPCRLRKCYEAGMTLGARRLKKLGNLKLQEEGEASSTTSPTEETTQKLTVSHIEGYECQPIFLNVLEAIEPGVVCAGHDNNQPDSFAALLSSLNELGERQLVHVVKWAKALPGFRNLHVDDQMAVIQYSWMGLMVFAMGWRSFTNVNSRMLYFAPDLVFNEYRMHKSRMYSQCVRMRHLSQEFGWLQITPQEFLCMKALLLFSIIPVDGLKNQKFFDELRMNYIKDLDRIIACKRKNPTSCSRRFYQLTKLLDSVQPIARELHQFTFDLLIKSHMVSVDFPEMMAEIISVQVPKILSGKVKPIYFHTQ.

Residues 1–550 are modulating; the sequence is MEVQLGLGRV…PIDYYFPPQK (550 aa). Positions 1–579 are interaction with ZNF318; that stretch reads MEVQLGLGRV…GSCKVFFKRA (579 aa). Disordered stretches follow at residues 35-156 and 204-236; these read QNPG…GPTF and QQQQ…YLGG. Ser69 is subject to Phosphoserine; by CDK9. A Phosphoserine modification is found at Ser82. Low complexity predominate over residues 204–213; that stretch reads QQQQEVVSEG. Polar residues predominate over residues 226 to 236; it reads PTSSKDSYLGG. The residue at position 233 (Tyr233) is a Phosphotyrosine; by CSK. Ser266 carries the post-translational modification Phosphoserine. Tyr277 is modified (phosphotyrosine; by CSK and TNK2). Phosphotyrosine; by CSK occurs at positions 315, 354, 365, and 370. A Phosphotyrosine; by CSK and TNK2 modification is found at Tyr371. Residues 375–394 form a disordered region; that stretch reads LSLAGPPPPPPSPHPHARIK. The segment covering 379–388 has biased composition (pro residues); it reads GPPPPPPSPH. Lys394 participates in a covalent cross-link: Glycyl lysine isopeptide (Lys-Gly) (interchain with G-Cter in SUMO). Tyr401 is modified (phosphotyrosine; by CSK). The tract at residues 452–490 is disordered; the sequence is LYGPCGGSGGGGTGESVSVTPYGYTRPQQGLTGQEGDFP. Gly residues predominate over residues 455–465; the sequence is PCGGSGGGGTG. A Glycyl lysine isopeptide (Lys-Gly) (interchain with G-Cter in SUMO) cross-link involves residue Lys513. Phosphotyrosine; by CSK occurs at positions 527 and 544. Residues 544 to 911 form an interaction with LPXN region; it reads YYFPPQKTCL…GKVKPIYFHT (368 aa). A DNA-binding region (nuclear receptor) is located at residues 551 to 624; it reads TCLICGDEAS…AGMTLGARRL (74 aa). NR C4-type zinc fingers lie at residues 552–572 and 588–612; these read CLIC…CGSC and CASR…LRKC. The segment at 564 to 654 is interaction with HIPK3; it reads YGALTCGSCK…TEETTQKLTV (91 aa). The interaction with CCAR1 stretch occupies residues 584 to 911; the sequence is QKYLCASRND…GKVKPIYFHT (328 aa). The segment at 617–911 is interaction with KAT7; the sequence is MTLGARRLKK…GKVKPIYFHT (295 aa). Ser643 bears the Phosphoserine; by STK4/MST1 mark. An NR LBD domain is found at 661-892; the sequence is ECQPIFLNVL…DFPEMMAEII (232 aa). The 17beta-hydroxy-5alpha-androstan-3-one site is built by Asn698 and Arg745. Glycyl lysine isopeptide (Lys-Gly) (interchain with G-Cter in ubiquitin) cross-links involve residues Lys838 and Lys840. 17beta-hydroxy-5alpha-androstan-3-one is bound at residue Thr870. Tyr908 is modified (phosphotyrosine; by CSK).

Belongs to the nuclear hormone receptor family. NR3 subfamily. In terms of assembly, binds DNA as a homodimer. Part of a ternary complex containing AR, EFCAB6/DJBP and PARK7. Interacts with HIPK3 and NR0B2 in the presence of androgen. The ligand binding domain interacts with KAT7/HBO1 in the presence of dihydrotestosterone. Interacts with EFCAB6/DJBP, PQBP1, RANBP9, RBAK, SPDEF, SRA1, TGFB1I1 and RREB1. Interacts with ZMIZ1/ZIMP10 and ZMIZ2/ZMIP7 which both enhance its transactivation activity. Interacts with SLC30A9 and RAD54L2/ARIP4. Interacts with MACROD1 (via macro domain). Interacts via the ligand-binding domain with LXXLL and FXXLF motifs from NCOA1, NCOA2, NCOA3 and MAGEA11. Interacts (via nuclear receptor DNA binding domain and nuclear receptor ligand binding domain) with NCOA4. The AR N-terminal poly-Gln region binds Ran resulting in enhancement of AR-mediated transactivation. Ran-binding decreases as the poly-Gln length increases. Interacts with HIP1 (via coiled coil domain). Interacts (via ligand-binding domain) with TRIM68. Interacts with TNK2. Interacts with USP26. Interacts with RNF6. Interacts (regulated by RNF6 probably through polyubiquitination) with RNF14; regulates AR transcriptional activity. Interacts with PRMT2 and TRIM24. Interacts with RACK1. Interacts with RANBP10; this interaction enhances dihydrotestosterone-induced AR transcriptional activity. Interacts with PRPF6 in a hormone-independent way; this interaction enhances dihydrotestosterone-induced AR transcriptional activity. Interacts with STK4/MST1. Interacts with ZIPK/DAPK3. Interacts with LPXN. Interacts with MAK. Part of a complex containing AR, MAK and NCOA3. Interacts with CRY1. Interacts with CCAR1 and GATA2. Interacts with ZNF318. Interacts with BUD31. Interacts with ARID4A. Interacts with ARID4B. Interacts (via NR LBD domain) with ZBTB7A; the interaction is direct and androgen-dependent. Interacts with NCOR1. Interacts with NCOR2. Interacts with CRY2 in a ligand-dependent manner. In terms of processing, phosphorylation by TNK2 enhances the DNA-binding and transcriptional activity. Phosphorylation at Ser-69 by CDK9 regulates AR promoter selectivity and cell growth. Sumoylated on Lys-394 (major) and Lys-513. Ubiquitinated. Deubiquitinated by USP26. 'Lys-6' and 'Lys-27'-linked polyubiquitination by RNF6 modulates AR transcriptional activity and specificity. Post-translationally, palmitoylated by ZDHHC7 and ZDHHC21. Palmitoylation is required for plasma membrane targeting and for rapid intracellular signaling via ERK and AKT kinases and cAMP generation.

The protein localises to the nucleus. It is found in the cytoplasm. Functionally, steroid hormone receptors are ligand-activated transcription factors that regulate eukaryotic gene expression and affect cellular proliferation and differentiation in target tissues. Transcription factor activity is modulated by bound coactivator and corepressor proteins like ZBTB7A that recruits NCOR1 and NCOR2 to the androgen response elements/ARE on target genes, negatively regulating androgen receptor signaling and androgen-induced cell proliferation. Transcription activation is also down-regulated by NR0B2. Activated, but not phosphorylated, by HIPK3 and ZIPK/DAPK3. This chain is Androgen receptor (AR), found in Crocuta crocuta (Spotted hyena).